A 1045-amino-acid chain; its full sequence is Septation initiation network scaffold protein cdc11 (1045 aa).

The segment covering 1-11 (MEQLWLEHDLS) has biased composition (basic and acidic residues). 2 disordered regions span residues 1 to 269 (MEQL…NTKD) and 282 to 329 (RGRM…PSLS). Over residues 18–39 (PQEQGSDNSSEPPTTSNVNNTQ) the composition is skewed to polar residues. 3 stretches are compositionally biased toward low complexity: residues 40–52 (STGR…STEH), 96–132 (KQSP…NVSN), and 152–165 (ISSS…SEGS). Residues 166–176 (LKSQQSNTRSN) are compositionally biased toward polar residues. Positions 187 to 201 (ASNASSSSSVVSSPS) are enriched in low complexity. 2 stretches are compositionally biased toward polar residues: residues 226 to 238 (NQLT…NSFE) and 320 to 329 (DSSNAFPSLS). Serine 360 is modified (phosphoserine). The interval 377–417 (DVGSSQSSSKTARLNSSPKSTLKTSSVKTRRSHSAQSSRKV) is disordered. The span at 379–403 (GSSQSSSKTARLNSSPKSTLKTSSV) shows a compositional bias: polar residues. Serine 558 bears the Phosphoserine mark. LRR repeat units lie at residues 604–625 (RIIQ…SELC), 627–646 (SIEE…GCPV), 647–668 (TIRD…SNLL), 669–690 (NLQY…SSLI), 691–712 (HLRE…QHLD), 713–734 (GLLK…NSNL), 736–757 (RLEE…SSLQ), 758–779 (NLMV…QPMI), 780–801 (HLRI…QFPH), 802–822 (LRTL…RRLK), 846–867 (DIRN…HMFL), 868–889 (GVRY…IATS), 892–913 (NLRV…KPLQ), 914–935 (MIHR…CDIL), and 940–962 (QLNV…IDDS). Residues 1005-1043 (AWRTRRKMYAEAILLACPHLEWLDGSDVSQSSRAAFTKS) enclose the LRRCT domain.

As to quaternary structure, interacts with sid4. When hyperphosphorylated, interacts with byr4. Also interacts with spg1, sid2, cdc13 and cdc16. Phosphorylated by cdc7 and cdk1. Hyperphosphorylated during anaphase. Dephosphorylated by par1.

The protein resides in the cytoplasm. The protein localises to the cytoskeleton. It localises to the microtubule organizing center. It is found in the spindle pole body. Functionally, essential for the onset of septum formation. Involved in the organization of astral microtubules during mitosis. Acts as a bridge between sid4 and the other SIN proteins mediating their association with the spindle pole body (SPB). The sid4-cdc11 complex organizes a signaling hub on the SPB which coordinates cell and nuclear division. The polypeptide is Septation initiation network scaffold protein cdc11 (cdc11) (Schizosaccharomyces pombe (strain 972 / ATCC 24843) (Fission yeast)).